Reading from the N-terminus, the 413-residue chain is Putative F-box/kelch-repeat protein At4g22430 (413 aa).

An F-box domain is found at 5-54; that stretch reads NNTITDVLEGIVTEILVRLPLRSISRFKSVSQTWKSAIESVYFRRLFVSL. A Kelch repeat occupies 168 to 210; the sequence is NMFLNKGEMYMPLYVYSSETGFWIHKEVVCPVRLPNFYDPISL.

This is Putative F-box/kelch-repeat protein At4g22430 from Arabidopsis thaliana (Mouse-ear cress).